Here is a 272-residue protein sequence, read N- to C-terminus: Phosphoribosylformylglycinamidine synthase subunit PurQ (272 aa).

Residues 8-272 (VLVMSGYGIN…FKNAVEYFNK (265 aa)) enclose the Glutamine amidotransferase type-1 domain. Residue C98 is the Nucleophile of the active site. Residues H225, E227, and E235 contribute to the active site.

Part of the FGAM synthase complex composed of 1 PurL, 1 PurQ and 2 PurS subunits.

Its subcellular location is the cytoplasm. It carries out the reaction N(2)-formyl-N(1)-(5-phospho-beta-D-ribosyl)glycinamide + L-glutamine + ATP + H2O = 2-formamido-N(1)-(5-O-phospho-beta-D-ribosyl)acetamidine + L-glutamate + ADP + phosphate + H(+). The catalysed reaction is L-glutamine + H2O = L-glutamate + NH4(+). It participates in purine metabolism; IMP biosynthesis via de novo pathway; 5-amino-1-(5-phospho-D-ribosyl)imidazole from N(2)-formyl-N(1)-(5-phospho-D-ribosyl)glycinamide: step 1/2. Part of the phosphoribosylformylglycinamidine synthase complex involved in the purines biosynthetic pathway. Catalyzes the ATP-dependent conversion of formylglycinamide ribonucleotide (FGAR) and glutamine to yield formylglycinamidine ribonucleotide (FGAM) and glutamate. The FGAM synthase complex is composed of three subunits. PurQ produces an ammonia molecule by converting glutamine to glutamate. PurL transfers the ammonia molecule to FGAR to form FGAM in an ATP-dependent manner. PurS interacts with PurQ and PurL and is thought to assist in the transfer of the ammonia molecule from PurQ to PurL. The chain is Phosphoribosylformylglycinamidine synthase subunit PurQ from Methanococcus maripaludis (strain DSM 14266 / JCM 13030 / NBRC 101832 / S2 / LL).